Reading from the N-terminus, the 491-residue chain is MKNQDQALIFEVSKEGRIGYSLPKLDVEEVKLEDVFESDYIRVEDAELPEVSELDIMRHYTALSNRNHGVDSGFYPLGSCTMKYNPKINESVARFAGFANIHPLQDEKTVQGAMELMYDLQEHLIEITGMDTVTLQPAAGAHGEWTGLMLIRAYHEANGDFNRTKVIVPDSAHGTNPASATVAGFETITVKSNEHGLVDLEDLKRVVNEETAALMLTNPNTLGLFEENILEMAEIVHNAGGKLYYDGANLNAVLSQARPGDMGFDVVHLNLHKTFTGPHGGGGPGSGPVGVKADLIPYLPKPILEKTEDGYRFNYDRPEAIGRVKPFYGNFGINVRAYTYIRSMGPDGLRAVTEYAVLNANYMMRRLAPFYDLPFDRHCKHEFVLSGRRQKKLGVRTLDIAKRLLDFGYHPPTIYFPLNVEECIMIEPTETESKETLDGFIDKMIQIAKEVEENPEVVQEAPHTTVIKRLDETMAARKPVLRYEKPAPVQV.

An N6-(pyridoxal phosphate)lysine modification is found at Lys273.

It belongs to the GcvP family. C-terminal subunit subfamily. In terms of assembly, the glycine cleavage system is composed of four proteins: P, T, L and H. In this organism, the P 'protein' is a heterodimer of two subunits. Pyridoxal 5'-phosphate serves as cofactor.

It carries out the reaction N(6)-[(R)-lipoyl]-L-lysyl-[glycine-cleavage complex H protein] + glycine + H(+) = N(6)-[(R)-S(8)-aminomethyldihydrolipoyl]-L-lysyl-[glycine-cleavage complex H protein] + CO2. Functionally, the glycine cleavage system catalyzes the degradation of glycine. The P protein binds the alpha-amino group of glycine through its pyridoxal phosphate cofactor; CO(2) is released and the remaining methylamine moiety is then transferred to the lipoamide cofactor of the H protein. This chain is Probable glycine dehydrogenase (decarboxylating) subunit 2, found in Bacillus cereus (strain ATCC 10987 / NRS 248).